A 68-amino-acid polypeptide reads, in one-letter code: Conotoxin mr3g (68 aa).

The N-terminal stretch at 1 to 19 is a signal peptide; that stretch reads MSKLGVLLTICLLLFALTA. Positions 20 to 51 are excised as a propeptide; it reads VPLDGDQPADRPAERMQDDISSERHPMFDAVR. Intrachain disulfides connect Cys-53–Cys-67, Cys-54–Cys-63, and Cys-59–Cys-66. A 4-hydroxyproline mark is found at Pro-55 and Pro-65. Cys-67 bears the Cysteine amide mark.

In terms of tissue distribution, expressed by the venom duct.

The protein resides in the secreted. Functionally, intracranially injection into mice does not elicit symptoms. The protein is Conotoxin mr3g of Conus marmoreus (Marble cone).